A 1011-amino-acid polypeptide reads, in one-letter code: MSGSRNNRVMVEGVGARVARGPDWKWGKQDGGEGHVGTVRSFESPEEVVVVWDNGTAANYRCSGAYDLRIMDSAPTGIKHDGTMCDTCRQQPIIGIRWKCAECTNYDLCTVCYHGDKHHLRHRFYRITTPGSERVLLESRRKSKKITARGIFAGARVVRGVDWQWEDQDGGNGRRGKVTEIQDWSASSPHSAAYVLWDNGAKNLYRVGFEGMSDLKCVQDAKGGSFYRDHCPVLGEQNGNRNPGGLLIGDLVNIDLELEIVQSLQHGHGGWTDGMFETLTTTGTVCGIDEDHDIVVQYPSGNRWTFNPAVLTKANVVRSGDAAQGAEGGTSPFQVGDLVQICYDIERIKLLQRGHGEWAEAMLPTLGKVGRVQQIYSDNDLKVEVCGTSWTYNPAAVSRVASVGSAISNATGERLSQLLKKLFETQESGDLNEELVKAAANGDVAKVDDLLKRQDVDVNGQCAGHTAMQAASQNGHVDILKLLLKHSVDVEAEDKDGDRAVHHAAFGDEGTVIEVLQRGGADLNARNKRRQTPLHIAVNKGHLQVVKKLLDFSCHPSLQDSEGDTPLHDAISKKRDDILAVLLEAGADVTITNNNGFNALHHAALRGNPSAMRVLLSKLPRPWIVDEKKDDGYTALHLAALNNHVEVAELLVHQGSANLDIQNVNQQTALHLAVERQHTQIVRLLVRAEAKLDIQDKDGDTPLHEALRHHTLSQLRQLQDMQDVGKVDTTTWEPSKNTLIMGLGTQGAEKKSAASIACFLAANGADLAVRNKKGQSPLDLCPDPNLCKTLAKCHKEKSSGQVGSHSPSMINNDSETLEECMVCSDLKRDTLFGPCGHIATCSLCSPRVKKCLLCKEQVQSRTKIEECVVCSDKKAAVLFQPCGHMCACENCASLMKKCVQCRAVVERRVPFVMCCSGKGTEDVADDIAGGNIPALQKDKDNTNVNADVQKLQQQLQDIKEQTMCPVCLDRLKNMIFMCGHGTCQLCGDRMSECPICRKAIERRILLYSMSC.

Residues 6–74 (NNRVMVEGVG…AYDLRIMDSA (69 aa)) form the MIB/HERC2 1 domain. The ZZ-type zinc finger occupies 80 to 132 (HDGTMCDTCRQQPIIGIRWKCAECTNYDLCTVCYHGDKHHLRHRFYRITTPGS). Zn(2+) is bound by residues C85, C88, C100, C103, C109, C112, H118, and H122. The region spanning 143–221 (SKKITARGIF…MSDLKCVQDA (79 aa)) is the MIB/HERC2 2 domain. 9 ANK repeats span residues 430–460 (DLNE…DVNG), 463–492 (AGHT…DVEA), 496–525 (DGDR…DLNA), 529–558 (RRQT…HPSL), 562–591 (EGDT…DVTI), 595–627 (NGFN…IVDE), 631–661 (DGYT…NLDI), 665–694 (NQQT…KLDI), and 698–729 (DGDT…KVDT). 2 consecutive RING-type zinc fingers follow at residues 820-855 (CMVC…LLCK) and 867-902 (CVVC…VQCR). Residues 936–963 (QKDKDNTNVNADVQKLQQQLQDIKEQTM) are a coiled coil. An RING-type 3 zinc finger spans residues 964–997 (CPVCLDRLKNMIFMCGHGTCQLCGDRMSECPICR).

It is found in the cytoplasm. The protein localises to the cytoskeleton. It localises to the microtubule organizing center. The protein resides in the centrosome. Its subcellular location is the centriolar satellite. The catalysed reaction is S-ubiquitinyl-[E2 ubiquitin-conjugating enzyme]-L-cysteine + [acceptor protein]-L-lysine = [E2 ubiquitin-conjugating enzyme]-L-cysteine + N(6)-ubiquitinyl-[acceptor protein]-L-lysine.. It participates in protein modification; protein ubiquitination. E3 ubiquitin-protein ligase that mediates ubiquitination of Delta receptors, which act as ligands of Notch proteins. Positively regulates the Delta-mediated Notch signaling by ubiquitinating the intracellular domain of Delta, leading to endocytosis of Delta receptors. The protein is E3 ubiquitin-protein ligase mib1 (mib1) of Xenopus laevis (African clawed frog).